The primary structure comprises 363 residues: Protein RecA (363 aa).

77 to 84 contributes to the ATP binding site; that stretch reads GPESSGKT.

It belongs to the RecA family.

The protein localises to the cytoplasm. Functionally, can catalyze the hydrolysis of ATP in the presence of single-stranded DNA, the ATP-dependent uptake of single-stranded DNA by duplex DNA, and the ATP-dependent hybridization of homologous single-stranded DNAs. It interacts with LexA causing its activation and leading to its autocatalytic cleavage. This Agrobacterium fabrum (strain C58 / ATCC 33970) (Agrobacterium tumefaciens (strain C58)) protein is Protein RecA.